The chain runs to 61 residues: Delta-actitoxin-Avd2c (61 aa).

Residues 1–20 (MMNRLLVFLMLGAFMLVVSA) form the signal peptide. The propeptide occupies 21 to 31 (NDAYGGDESLG). 3 disulfides stabilise this stretch: cysteine 36-cysteine 51, cysteine 37-cysteine 45, and cysteine 39-cysteine 56.

The protein belongs to the sea anemone short toxin (type III) family.

Its subcellular location is the secreted. It is found in the nematocyst. In terms of biological role, sodium channel inhibitor. 5 uM completely inhibits voltage-gated sodium channel (Nav) inactivation. The polypeptide is Delta-actitoxin-Avd2c (Anemonia viridis (Snakelocks anemone)).